Consider the following 247-residue polypeptide: Probable transcriptional regulatory protein Dvul_0986 (247 aa).

The segment at 1–22 is disordered; it reads MAGHSKWANIQHRKGRQDAKRG.

It belongs to the TACO1 family.

Its subcellular location is the cytoplasm. This chain is Probable transcriptional regulatory protein Dvul_0986, found in Nitratidesulfovibrio vulgaris (strain DP4) (Desulfovibrio vulgaris).